The following is a 509-amino-acid chain: MWVLLAVFLLTLAYLFWPKTKHSGAKYPRSLPSLPLVGSLPFLPRRGQQHENFFKLQEKYGPIYSFRLGSKTTVMIGHHQLAREVLLKKGKEFSGRPKVATLDILSDNQKGIAFADHGAHWQLHRKLVLNAFALFKDGNLKLEKIINQEANVLCDFLATQHGQSIDLSEPLSLAVTNIISFICFNFSFKNEDPALKAIQNVNDGILEVLGKEVLLDIFPALKIFPSKAMEKMKGCVETRNELLSEILEKCQENFTSDSITNLLHILMQAKVNADNNNTGPEQDSKLLSNRHMLATIADIFGAGVETTTSVIKWIVAYLLHHPSLKKRIQDSIDQNIGFNRTPTISDRNRLVLLEATIREVLRIRPVAPMLIPHKAIIDSSIGDLTIDKGTDVVVNLWALHHNEKEWQQPDLFMPERFLDPTGTQLISPSLSYLPFGAGPRSCVGEMLARQELFLFMSRLLQRFNLEIPDDGKLPSLEGNPSLVLQIKPFKVKIEVRQAWKEAQAEGSTS.

Asn202 provides a ligand contact to substrate. Heme is bound at residue Cys442.

It belongs to the cytochrome P450 family. Requires heme as cofactor.

It is found in the endoplasmic reticulum membrane. The protein localises to the microsome membrane. It carries out the reaction a C21-steroid + reduced [NADPH--hemoprotein reductase] + O2 = a 17alpha-hydroxy-C21-steroid + oxidized [NADPH--hemoprotein reductase] + H2O + H(+). The catalysed reaction is progesterone + reduced [NADPH--hemoprotein reductase] + O2 = 17alpha-hydroxyprogesterone + oxidized [NADPH--hemoprotein reductase] + H2O + H(+). The enzyme catalyses pregnenolone + reduced [NADPH--hemoprotein reductase] + O2 = 17alpha-hydroxypregnenolone + oxidized [NADPH--hemoprotein reductase] + H2O + H(+). It catalyses the reaction 17alpha-hydroxyprogesterone + reduced [NADPH--hemoprotein reductase] + O2 = androst-4-ene-3,17-dione + acetate + oxidized [NADPH--hemoprotein reductase] + H2O + 2 H(+). It carries out the reaction 17alpha-hydroxyprogesterone + reduced [NADPH--hemoprotein reductase] + O2 = 16alpha,17alpha-dihydroxyprogesterone + oxidized [NADPH--hemoprotein reductase] + H2O + H(+). The catalysed reaction is 16alpha,17alpha-dihydroxyprogesterone + reduced [NADPH--hemoprotein reductase] + O2 = 6beta,16alpha,17alpha-trihydroxyprogesterone + oxidized [NADPH--hemoprotein reductase] + H2O + H(+). The enzyme catalyses 17alpha-hydroxypregnenolone + reduced [NADPH--hemoprotein reductase] + O2 = 3beta-hydroxyandrost-5-en-17-one + acetate + oxidized [NADPH--hemoprotein reductase] + H2O + 2 H(+). It catalyses the reaction 16alpha,17alpha-dihydroxypregnenolone + reduced [NADPH--hemoprotein reductase] + O2 = 3beta,16alpha-dihydroxy-androst-5-en-17-one + acetate + oxidized [NADPH--hemoprotein reductase] + H2O + 2 H(+). It carries out the reaction 3beta-hydroxyandrost-5-en-17-one + reduced [NADPH--hemoprotein reductase] + O2 = 3beta,16alpha-dihydroxy-androst-5-en-17-one + oxidized [NADPH--hemoprotein reductase] + H2O + H(+). The catalysed reaction is androst-4-ene-3,17-dione + reduced [NADPH--hemoprotein reductase] + O2 = 16alpha-hydroxyandrost-4-ene-3,17-dione + oxidized [NADPH--hemoprotein reductase] + H2O + H(+). The protein operates within steroid hormone biosynthesis. It participates in steroid biosynthesis; glucocorticoid biosynthesis. Regulated predominantly by intracellular cAMP levels. The 17,20-lyase activity is stimulated by cytochrome b5, which acts as an allosteric effector increasing the Vmax of the lyase activity. Functionally, a cytochrome P450 monooxygenase involved in corticoid and androgen biosynthesis. Catalyzes 17-alpha hydroxylation of C21 steroids, which is common for both pathways. A second oxidative step, required only for androgen synthesis, involves an acyl-carbon cleavage. The 17-alpha hydroxy intermediates, as part of adrenal glucocorticoids biosynthesis pathway, are precursors of cortisol. Hydroxylates steroid hormones, pregnenolone and progesterone to form 17-alpha hydroxy metabolites, followed by the cleavage of the C17-C20 bond to form C19 steroids, dehydroepiandrosterone (DHEA) and androstenedione. Has 16-alpha hydroxylase activity. Catalyzes 16-alpha hydroxylation of 17-alpha hydroxy pregnenolone, followed by the cleavage of the C17-C20 bond to form 16-alpha-hydroxy DHEA. Also 16-alpha hydroxylates androgens, relevant for estriol synthesis. Mechanistically, uses molecular oxygen inserting one oxygen atom into a substrate, and reducing the second into a water molecule, with two electrons provided by NADPH via cytochrome P450 reductase (CPR; NADPH-ferrihemoprotein reductase). The chain is Steroid 17-alpha-hydroxylase/17,20 lyase (CYP17A1) from Ovis aries (Sheep).